Reading from the N-terminus, the 287-residue chain is (S)-phenoxypropionate/alpha-ketoglutarate-dioxygenase (287 aa).

Residues His102 and Asp104 each contribute to the Fe cation site. The 2-oxoglutarate site is built by Thr129 and Trp242. His257 lines the Fe cation pocket. Residue Arg268 participates in 2-oxoglutarate binding.

Belongs to the TfdA dioxygenase family. As to quaternary structure, monomer. Requires Fe cation as cofactor. L-ascorbate is required as a cofactor.

It catalyses the reaction (S)-2-(4-chloro-2-methylphenoxy)propanoate + 2-oxoglutarate + O2 = 2-methyl-4-chlorophenol + pyruvate + succinate + CO2. The enzyme catalyses (S)-(2,4-dichlorophenoxy)propanoate + 2-oxoglutarate + O2 = 2,4-dichlorophenol + pyruvate + succinate + CO2. The protein operates within xenobiotic degradation; 2-(2,4-dichlorophenoxy)propanoate degradation. Its function is as follows. Involved in the degradation of the phenoxypropionate herbicides. Catalyzes the enantiospecific cleavage of the ether bond in the herbicid S-dichlorprop ((S)-2-(2,4-dichlorophenoxy)propionate)(S-2,4-DP) and S-mecoprop ((S)-2-(4-chloro-2-methylphenoxy)propionate)(S-2,4-MCPP). It can also accept (RS)-2-(4-chloro-2-methylphenoxy)propionate ((RS)-2,4-MCPP) and phenoxyacetate derivatives such as 2,4-dichlorophenoxyacetate (2,4-D), however it can only accept 2-oxoglutarate as oxygen acceptor. The sequence is that of (S)-phenoxypropionate/alpha-ketoglutarate-dioxygenase from Sphingobium herbicidovorans (strain ATCC 700291 / DSM 11019 / CCUG 56400 / KCTC 2939 / LMG 18315 / NBRC 16415 / MH) (Sphingomonas herbicidovorans).